The chain runs to 213 residues: Penicillin-binding protein activator LpoB (213 aa).

Positions 1–19 (MMKMNRYALVAALAIFLSG) are cleaved as a signal peptide. Cys20 carries N-palmitoyl cysteine lipidation. A lipid anchor (S-diacylglycerol cysteine) is attached at Cys20. A disordered region spans residues 26-71 (PAPVDEVKPAPEQPAEPQQPVPVVPSVPTIPQQPGPIEHEDQTAQP). Positions 36 to 50 (PEQPAEPQQPVPVVP) are enriched in pro residues.

It belongs to the LpoB family. In terms of assembly, interacts with PBP1b.

The protein localises to the cell outer membrane. Regulator of peptidoglycan synthesis that is essential for the function of penicillin-binding protein 1B (PBP1b). This chain is Penicillin-binding protein activator LpoB, found in Citrobacter koseri (strain ATCC BAA-895 / CDC 4225-83 / SGSC4696).